Consider the following 60-residue polypeptide: MACPKKKTSKSKRSMRRAAWKRQAALQAQRALSIGKSILTERAQGFYFPEAEEENEDEQE.

A compositionally biased stretch (basic residues) spans methionine 1–tryptophan 20. The interval methionine 1–arginine 22 is disordered.

This sequence belongs to the bacterial ribosomal protein bL32 family.

The sequence is that of Large ribosomal subunit protein bL32 from Thermosynechococcus vestitus (strain NIES-2133 / IAM M-273 / BP-1).